We begin with the raw amino-acid sequence, 479 residues long: UDP-N-acetylmuramate--L-alanine ligase (479 aa).

Residue 124–130 (GSHGKTT) participates in ATP binding.

It belongs to the MurCDEF family.

It localises to the cytoplasm. It carries out the reaction UDP-N-acetyl-alpha-D-muramate + L-alanine + ATP = UDP-N-acetyl-alpha-D-muramoyl-L-alanine + ADP + phosphate + H(+). It participates in cell wall biogenesis; peptidoglycan biosynthesis. Its function is as follows. Cell wall formation. This chain is UDP-N-acetylmuramate--L-alanine ligase, found in Synechococcus sp. (strain RCC307).